The chain runs to 164 residues: MLHEPRFWSAVAFVLFFVLFGKKLWTPLAAALDSRADRIRADLDEAARLRREAEQMLEDATRERETAMVEARALVEHSLIEAARIADEARREAEAVATRREQMARDRIAASERSAVREVRQVAIDVAIQATRDVLATALPAGADHAIVDRAIADLPSALSHRAA.

The chain crosses the membrane as a helical span at residues 10–32; sequence AVAFVLFFVLFGKKLWTPLAAAL.

It belongs to the ATPase B chain family. As to quaternary structure, F-type ATPases have 2 components, F(1) - the catalytic core - and F(0) - the membrane proton channel. F(1) has five subunits: alpha(3), beta(3), gamma(1), delta(1), epsilon(1). F(0) has three main subunits: a(1), b(2) and c(10-14). The alpha and beta chains form an alternating ring which encloses part of the gamma chain. F(1) is attached to F(0) by a central stalk formed by the gamma and epsilon chains, while a peripheral stalk is formed by the delta and b chains.

It localises to the cell inner membrane. F(1)F(0) ATP synthase produces ATP from ADP in the presence of a proton or sodium gradient. F-type ATPases consist of two structural domains, F(1) containing the extramembraneous catalytic core and F(0) containing the membrane proton channel, linked together by a central stalk and a peripheral stalk. During catalysis, ATP synthesis in the catalytic domain of F(1) is coupled via a rotary mechanism of the central stalk subunits to proton translocation. In terms of biological role, component of the F(0) channel, it forms part of the peripheral stalk, linking F(1) to F(0). This Gluconacetobacter diazotrophicus (strain ATCC 49037 / DSM 5601 / CCUG 37298 / CIP 103539 / LMG 7603 / PAl5) protein is ATP synthase subunit b.